We begin with the raw amino-acid sequence, 730 residues long: Zinc finger protein 615 (730 aa).

Residues 7 to 78 (LTLEDVAVDF…EDEIYSRICF (72 aa)) form the KRAB domain. C2H2-type zinc fingers lie at residues 203–225 (HVCSECGKAFLKLSQFIDHQRVH), 231–253 (HVCSMCGKAFSRKSRLMDHQRTH), 259–281 (YECTECDKTFLKKSQLNIHQKTH), 287–309 (YTCSECGKAFIKKCRLIYHQRTH), 315–337 (HGCSVCGKAFSTKFSLTTHQKTH), 343–365 (YICSECGKGFIEKRRLIAHHRTH), 371–393 (FICNKCGKGFTLKNSLITHQQTH), 399–421 (YTCSECGKGFSMKHCLMVHQRTH), 427–449 (YKCNECGKGFALKSPLIRHQRTH), 455–477 (YVCTECRKGFTMKSDLIVHQRTH), 483–505 (YICNDCGKGFTVKSRLIVHQRTH), 511–533 (YVCGECGKGFPAKIRLMGHQRTH), 539–561 (YICDECGKGFTEKSHLNVHRRTH), 567–589 (YVCSECGKGLTGKSMLIAHQRTH), 595–617 (YICNECGKGFTMKSTLSIHQQTH), 623–645 (YKCNECDKSFRKKTCLIQHQRFH), 651–673 (FACTECGKFSLRKNDLITHQRIH), 679–701 (YKCSDCGKAFTTKSGLNVHQRKH), and 707–729 (YGCSDCGKAFAHLSILVKHKRIH).

It belongs to the krueppel C2H2-type zinc-finger protein family.

The protein resides in the nucleus. May be involved in transcriptional regulation. The protein is Zinc finger protein 615 (ZNF615) of Pongo abelii (Sumatran orangutan).